The following is a 1448-amino-acid chain: Sister chromatid cohesion protein PDS5 homolog B-A (1448 aa).

One copy of the HEAT repeat lies at 383–419; sequence LLVNDQLLNFVRERTLDKRWRVRKEAMMGLAQIYKKY. The segment covering 1141–1155 has biased composition (polar residues); sequence AGKQMLSKSSRMETV. Positions 1141–1448 are disordered; it reads AGKQMLSKSS…TGRLRSAKKR (308 aa). Low complexity predominate over residues 1156–1168; it reads SNASSGSNPSSPG. A compositionally biased stretch (acidic residues) spans 1177–1186; it reads MELDQSENED. Basic and acidic residues-rich tracts occupy residues 1196–1214, 1233–1243, and 1264–1273; these read KKSDKRDDSDLLKSELEKP, ELSKPAQEPKS, and WQEKRLKEDL. A compositionally biased stretch (basic residues) spans 1285-1294; sequence KKGRRGRPPK. Positions 1286-1298 form a DNA-binding region, a.T hook 1; that stretch reads KGRRGRPPKSAKM. The span at 1324-1341 shows a compositional bias: acidic residues; that stretch reads PTDEDDHLEISEEQDFEN. Positions 1346-1356 are enriched in basic residues; it reads RKGRGSSRRTP. 2 DNA-binding regions (a.T hook) span residues 1374–1386 and 1390–1402; these read QKRRGRPPKTPTV and KSHVGRPRKVVSK. Over residues 1389 to 1399 the composition is skewed to basic residues; that stretch reads KKSHVGRPRKV.

Belongs to the PDS5 family. As to quaternary structure, interacts with the cohesin complex. In terms of processing, phosphorylated in mitotic cells.

The protein localises to the nucleus. Plays a role in androgen-induced proliferative arrest. Required for maintenance of sister chromatid cohesion during mitosis. In Xenopus laevis (African clawed frog), this protein is Sister chromatid cohesion protein PDS5 homolog B-A (pds5b-a).